The following is a 261-amino-acid chain: 3-deoxy-manno-octulosonate cytidylyltransferase (261 aa).

Belongs to the KdsB family.

It is found in the cytoplasm. The catalysed reaction is 3-deoxy-alpha-D-manno-oct-2-ulosonate + CTP = CMP-3-deoxy-beta-D-manno-octulosonate + diphosphate. It participates in nucleotide-sugar biosynthesis; CMP-3-deoxy-D-manno-octulosonate biosynthesis; CMP-3-deoxy-D-manno-octulosonate from 3-deoxy-D-manno-octulosonate and CTP: step 1/1. Its pathway is bacterial outer membrane biogenesis; lipopolysaccharide biosynthesis. In terms of biological role, activates KDO (a required 8-carbon sugar) for incorporation into bacterial lipopolysaccharide in Gram-negative bacteria. The protein is 3-deoxy-manno-octulosonate cytidylyltransferase of Marinobacter nauticus (strain ATCC 700491 / DSM 11845 / VT8) (Marinobacter aquaeolei).